Reading from the N-terminus, the 591-residue chain is ESX-1 secretion system protein EccCb1 (591 aa).

FtsK domains lie at 65-259 (LQDV…NETQ) and 359-545 (LTPA…EKQE). ATP is bound by residues 84–91 (GAPQTGKS) and 376–383 (GAAKSGKT).

As to quaternary structure, part of the ESX-1 / type VII secretion system (T7SS), which is composed of cytosolic and membrane components. The ESX-1 membrane complex is composed of EccB1, EccCa1, EccCb1, EccD1 and EccE1. Interacts with EccCa1, EspK and the C-terminus of EsxB. Residues 1-261 interact with EsxB and an artificial EsxB-EsxA heterodimer.

It is found in the cytoplasm. Its activity is regulated as follows. EsxB binding to the second FtsK domain of EccCb1 causes multimerization; a subsequent unknown step relieves the allosteric inhibition of linker 2 on FtsK domain 1 (in EccCa1 subunit), activating the ATPase activity. Its function is as follows. Part of the ESX-1 specialized secretion system, which delivers several virulence factors to host cells during infection, including the key virulence factors EsxA (ESAT-6) and EsxB (CFP-10). EccCb1 may link the cytosolic components of the system with the membrane components. This chain is ESX-1 secretion system protein EccCb1, found in Mycobacterium tuberculosis (strain ATCC 25618 / H37Rv).